Consider the following 811-residue polypeptide: Glycerol-3-phosphate acyltransferase (811 aa).

The short motif at 303 to 308 is the HXXXXD motif element; it reads HRSHMD.

This sequence belongs to the GPAT/DAPAT family.

The protein localises to the cell inner membrane. The enzyme catalyses sn-glycerol 3-phosphate + an acyl-CoA = a 1-acyl-sn-glycero-3-phosphate + CoA. It participates in phospholipid metabolism; CDP-diacylglycerol biosynthesis; CDP-diacylglycerol from sn-glycerol 3-phosphate: step 1/3. The chain is Glycerol-3-phosphate acyltransferase from Haemophilus ducreyi (strain 35000HP / ATCC 700724).